Reading from the N-terminus, the 368-residue chain is Chaperone protein DnaJ (368 aa).

The region spanning 5–69 (DYYEVLGLDK…QKRAQYDRFG (65 aa)) is the J domain. A CR-type zinc finger spans residues 126–208 (GKTETIELEI…CHGSGHVKKK (83 aa)). Zn(2+) contacts are provided by Cys-139, Cys-142, Cys-156, Cys-159, Cys-182, Cys-185, Cys-196, and Cys-199. CXXCXGXG motif repeat units lie at residues 139–146 (CDTCMGSG), 156–163 (CNRCGGSG), 182–189 (CSQCHGSG), and 196–203 (CPTCHGSG).

The protein belongs to the DnaJ family. Homodimer. Zn(2+) serves as cofactor.

It is found in the cytoplasm. In terms of biological role, participates actively in the response to hyperosmotic and heat shock by preventing the aggregation of stress-denatured proteins and by disaggregating proteins, also in an autonomous, DnaK-independent fashion. Unfolded proteins bind initially to DnaJ; upon interaction with the DnaJ-bound protein, DnaK hydrolyzes its bound ATP, resulting in the formation of a stable complex. GrpE releases ADP from DnaK; ATP binding to DnaK triggers the release of the substrate protein, thus completing the reaction cycle. Several rounds of ATP-dependent interactions between DnaJ, DnaK and GrpE are required for fully efficient folding. Also involved, together with DnaK and GrpE, in the DNA replication of plasmids through activation of initiation proteins. In Exiguobacterium sp. (strain ATCC BAA-1283 / AT1b), this protein is Chaperone protein DnaJ.